Reading from the N-terminus, the 295-residue chain is Acetylglutamate kinase (295 aa).

Substrate contacts are provided by residues 61-62, R83, and N187; that span reads GG.

This sequence belongs to the acetylglutamate kinase family. ArgB subfamily.

The protein resides in the cytoplasm. The catalysed reaction is N-acetyl-L-glutamate + ATP = N-acetyl-L-glutamyl 5-phosphate + ADP. Its pathway is amino-acid biosynthesis; L-arginine biosynthesis; N(2)-acetyl-L-ornithine from L-glutamate: step 2/4. Functionally, catalyzes the ATP-dependent phosphorylation of N-acetyl-L-glutamate. In Methanocorpusculum labreanum (strain ATCC 43576 / DSM 4855 / Z), this protein is Acetylglutamate kinase.